Reading from the N-terminus, the 535-residue chain is Flavin-containing monooxygenase iboF (535 aa).

An N-terminal signal peptide occupies residues 1-24 (MFSLRPTALVSLSVVLFSIQETLS). 60-65 (GAGPSG) contacts FAD. Residues N134, N243, and N300 are each glycosylated (N-linked (GlcNAc...) asparagine). 307–312 (GAAASG) is an NADP(+) binding site. Residues N356, N382, and N410 are each glycosylated (N-linked (GlcNAc...) asparagine).

This sequence belongs to the FMO family. The cofactor is FAD.

The protein operates within secondary metabolite biosynthesis. In terms of biological role, flavin-containing monooxygenase; part of the gene cluster that mediates the biosynthesis of the psychoactive metabolites ibotenic acid and muscimol. The first committed step is glutamate hydroxylation by the 2-oxoglutarate-dependent dioxygenase iboH, and the last step is decarboxylation of ibotenic acid to muscimol by the decarboxylase iboD. The order of the intermediate reactions is somewhat ambiguous. IboA likely activates the carboxylic acid at position 5 to introduce an amide bond, and the flavin monooxygenase iboF generates the N-O bond. There are several options for the latter step. One option is that iboF directly hydroxylates the amide nitrogen formed by iboA to produce a hydroxamic acid species. Another option is that iboF hydroxylates an external N-containing compound, whose resulting N-O bond is subsequently introduced into the hydroxyglutamate scaffold. The paralogous PLP-dependent cystathionine gamma-synthase-like enzymes iboG1 and iboG2 are likely involved in substitution of the OH group at position 3 by the O-N moiety. The first cyclic intermediate is most probably tricholomic acid which is likely desaturated to ibotenic acid by the cytochrome P450 monooxygenase iboC. The polypeptide is Flavin-containing monooxygenase iboF (Amanita muscaria (strain Koide BX008)).